We begin with the raw amino-acid sequence, 338 residues long: Adenylosuccinate synthetase (338 aa).

GTP is bound by residues 12-18 (GDEGKGK) and 42-44 (GHT). Catalysis depends on aspartate 13, which acts as the Proton acceptor. The Mg(2+) site is built by aspartate 13 and glycine 42. IMP-binding positions include 13–16 (DEGK), 40–43 (NAGH), threonine 127, arginine 141, glutamine 179, threonine 194, and arginine 256. Catalysis depends on histidine 43, which acts as the Proton donor. Residue 252 to 258 (TVTGRRR) participates in substrate binding. GTP-binding positions include arginine 258, 284–286 (CLD), and 324–326 (STG).

The protein belongs to the adenylosuccinate synthetase family. In terms of assembly, homodimer. It depends on Mg(2+) as a cofactor.

The protein resides in the cytoplasm. It catalyses the reaction IMP + L-aspartate + GTP = N(6)-(1,2-dicarboxyethyl)-AMP + GDP + phosphate + 2 H(+). It functions in the pathway purine metabolism; AMP biosynthesis via de novo pathway; AMP from IMP: step 1/2. Functionally, plays an important role in the de novo pathway of purine nucleotide biosynthesis. Catalyzes the first committed step in the biosynthesis of AMP from IMP. This Methanococcus maripaludis (strain DSM 14266 / JCM 13030 / NBRC 101832 / S2 / LL) protein is Adenylosuccinate synthetase.